Reading from the N-terminus, the 364-residue chain is Aromatic prenyltransferase (364 aa).

The signal sequence occupies residues 1 to 22; sequence MDRNQWTLALMALMRFAHRAFI. N-linked (GlcNAc...) asparagine glycosylation is found at Asn-142 and Asn-337.

This sequence belongs to the aromatic prenyltransferase family.

Its function is as follows. Prenyltransferase that attaches isoprenoid moieties to carbon atoms of aromatic substrates in an enzyme-catalyzed Friedel-Crafts reaction. This chain is Aromatic prenyltransferase, found in Talaromyces marneffei (strain ATCC 18224 / CBS 334.59 / QM 7333) (Penicillium marneffei).